Reading from the N-terminus, the 509-residue chain is Steroid 17-alpha-hydroxylase/17,20 lyase (509 aa).

Cysteine 445 contributes to the heme binding site.

It belongs to the cytochrome P450 family. It depends on heme as a cofactor.

It localises to the membrane. It catalyses the reaction a C21-steroid + reduced [NADPH--hemoprotein reductase] + O2 = a 17alpha-hydroxy-C21-steroid + oxidized [NADPH--hemoprotein reductase] + H2O + H(+). The enzyme catalyses 17alpha-hydroxyprogesterone + reduced [NADPH--hemoprotein reductase] + O2 = androst-4-ene-3,17-dione + acetate + oxidized [NADPH--hemoprotein reductase] + H2O + 2 H(+). The catalysed reaction is 17alpha-hydroxypregnenolone + reduced [NADPH--hemoprotein reductase] + O2 = 3beta-hydroxyandrost-5-en-17-one + acetate + oxidized [NADPH--hemoprotein reductase] + H2O + 2 H(+). The protein operates within lipid metabolism; steroid biosynthesis. Conversion of pregnenolone and progesterone to their 17-alpha-hydroxylated products and subsequently to dehydroepiandrosterone (DHEA) and androstenedione. Catalyzes both the 17-alpha-hydroxylation and the 17,20-lyase reaction. This Squalus acanthias (Spiny dogfish) protein is Steroid 17-alpha-hydroxylase/17,20 lyase (CYP17A1).